Consider the following 146-residue polypeptide: Histone H2B (146 aa).

Residues 1-16 (MAPRADKKPAEKKPGA) are compositionally biased toward basic and acidic residues. The interval 1-52 (MAPRADKKPAEKKPGAEKTPVAEKAPAEKKPRAGKKLPRDAGAAGDKKKKRA) is disordered. N6-acetyllysine is present on residues lysine 7, lysine 35, and lysine 36. Lysine 142 participates in a covalent cross-link: Glycyl lysine isopeptide (Lys-Gly) (interchain with G-Cter in ubiquitin).

It belongs to the histone H2B family. The nucleosome is a histone octamer containing two molecules each of H2A, H2B, H3 and H4 assembled in one H3-H4 heterotetramer and two H2A-H2B heterodimers. The octamer wraps approximately 147 bp of DNA. Post-translationally, can be acetylated to form H2BK6ac, H2BK33ac and H2BK34ac. Monoubiquitinated to form H2BK143ub1; may give a specific tag for epigenetic transcriptional activation.

It localises to the nucleus. The protein localises to the chromosome. Functionally, core component of nucleosome. Nucleosomes wrap and compact DNA into chromatin, limiting DNA accessibility to the cellular machineries which require DNA as a template. Histones thereby play a central role in transcription regulation, DNA repair, DNA replication and chromosomal stability. DNA accessibility is regulated via a complex set of post-translational modifications of histones, also called histone code, and nucleosome remodeling. The polypeptide is Histone H2B (HIS2B) (Nicotiana tabacum (Common tobacco)).